Here is a 439-residue protein sequence, read N- to C-terminus: L-cysteine:1D-myo-inositol 2-amino-2-deoxy-alpha-D-glucopyranoside ligase 2 (439 aa).

Cys-60 contacts Zn(2+). L-cysteinyl-5'-AMP contacts are provided by residues 60 to 63 (CGIT), Thr-75, and 98 to 100 (NVT). The short motif at 62–72 (ITPYDSTHLGH) is the 'HIGH' region element. Residues 203 to 208 (ERGGDP) carry the 'ERGGDP' region motif. An L-cysteinyl-5'-AMP-binding site is contributed by Trp-243. Residue Cys-247 participates in Zn(2+) binding. 265–267 (GVD) lines the L-cysteinyl-5'-AMP pocket. His-272 contacts Zn(2+). L-cysteinyl-5'-AMP is bound at residue Ile-299. The short motif at 305-309 (KMSKS) is the 'KMSKS' region element.

This sequence belongs to the class-I aminoacyl-tRNA synthetase family. MshC subfamily. Monomer. Requires Zn(2+) as cofactor.

The catalysed reaction is 1D-myo-inositol 2-amino-2-deoxy-alpha-D-glucopyranoside + L-cysteine + ATP = 1D-myo-inositol 2-(L-cysteinylamino)-2-deoxy-alpha-D-glucopyranoside + AMP + diphosphate + H(+). Catalyzes the ATP-dependent condensation of GlcN-Ins and L-cysteine to form L-Cys-GlcN-Ins. The polypeptide is L-cysteine:1D-myo-inositol 2-amino-2-deoxy-alpha-D-glucopyranoside ligase 2 (Corynebacterium urealyticum (strain ATCC 43042 / DSM 7109)).